Here is a 256-residue protein sequence, read N- to C-terminus: uncharacterized protein (256 aa).

This is an uncharacterized protein from Escherichia coli (strain K12).